The primary structure comprises 175 residues: Nucleoside diphosphate kinase 6 (175 aa).

Residues Lys-8, Phe-57, Arg-85, Thr-91, Arg-105, and Asn-115 each coordinate ATP. The Pros-phosphohistidine intermediate role is filled by His-118.

This sequence belongs to the NDK family. Mg(2+) serves as cofactor.

It carries out the reaction a 2'-deoxyribonucleoside 5'-diphosphate + ATP = a 2'-deoxyribonucleoside 5'-triphosphate + ADP. The catalysed reaction is a ribonucleoside 5'-diphosphate + ATP = a ribonucleoside 5'-triphosphate + ADP. Major role in the synthesis of nucleoside triphosphates other than ATP. The ATP gamma phosphate is transferred to the NDP beta phosphate via a ping-pong mechanism, using a phosphorylated active-site intermediate. The protein is Nucleoside diphosphate kinase 6 (Nme6) of Rattus norvegicus (Rat).